Consider the following 147-residue polypeptide: Large ribosomal subunit protein uL11 (147 aa).

It belongs to the universal ribosomal protein uL11 family. As to quaternary structure, part of the ribosomal stalk of the 50S ribosomal subunit. Interacts with L10 and the large rRNA to form the base of the stalk. L10 forms an elongated spine to which L12 dimers bind in a sequential fashion forming a multimeric L10(L12)X complex. Post-translationally, one or more lysine residues are methylated.

Forms part of the ribosomal stalk which helps the ribosome interact with GTP-bound translation factors. This chain is Large ribosomal subunit protein uL11, found in Bacteroides fragilis (strain ATCC 25285 / DSM 2151 / CCUG 4856 / JCM 11019 / LMG 10263 / NCTC 9343 / Onslow / VPI 2553 / EN-2).